We begin with the raw amino-acid sequence, 98 residues long: NADH-ubiquinone oxidoreductase chain 4L (98 aa).

The next 3 membrane-spanning stretches (helical) occupy residues 1–21, 29–49, and 61–81; these read MTLI…GLLM, ALLC…LTIL, and IILL…LVMV.

The protein belongs to the complex I subunit 4L family. As to quaternary structure, core subunit of respiratory chain NADH dehydrogenase (Complex I) which is composed of 45 different subunits.

It is found in the mitochondrion inner membrane. The enzyme catalyses a ubiquinone + NADH + 5 H(+)(in) = a ubiquinol + NAD(+) + 4 H(+)(out). Core subunit of the mitochondrial membrane respiratory chain NADH dehydrogenase (Complex I) which catalyzes electron transfer from NADH through the respiratory chain, using ubiquinone as an electron acceptor. Part of the enzyme membrane arm which is embedded in the lipid bilayer and involved in proton translocation. The polypeptide is NADH-ubiquinone oxidoreductase chain 4L (MT-ND4L) (Balaenoptera borealis (Sei whale)).